A 122-amino-acid polypeptide reads, in one-letter code: uncharacterized protein (122 aa).

This is an uncharacterized protein from Acidianus sp. F28 (AFV-2).